The sequence spans 378 residues: Probable mannosyltransferase MNT3 (378 aa).

At 1-4 (MLWH) the chain is on the cytoplasmic side. A helical; Signal-anchor for type II membrane protein membrane pass occupies residues 5–25 (LVFILIAILLLTFSPKIESLF). Residues 26–378 (KSFTINKPTK…TNHFLNILHN (353 aa)) are Lumenal-facing. 2 N-linked (GlcNAc...) asparagine glycosylation sites follow: N73 and N149.

Belongs to the glycosyltransferase 15 family.

The protein localises to the membrane. Its function is as follows. Transfers an alpha-D-mannosyl residue from GDP-mannose into lipid-linked oligosaccharide, forming an alpha-(1-&gt;2)-D-mannosyl-D-mannose linkage. In Candida albicans (strain SC5314 / ATCC MYA-2876) (Yeast), this protein is Probable mannosyltransferase MNT3 (MNT3).